The chain runs to 203 residues: GTP-binding protein YPTC1 (203 aa).

GTP is bound by residues 15–23, 33–40, 63–67, 121–124, and 151–153; these read GDSGVGKSC, YTESYIST, DTAGQ, NKSD, and SAK. An Effector region motif is present at residues 37–45; sequence YISTIGVDF. The tract at residues 174 to 203 is disordered; sequence ASQPIPTKAGGPVVRPQEGKPINSKSSSCC. 2 S-geranylgeranyl cysteine lipidation sites follow: C202 and C203.

It belongs to the small GTPase superfamily. Rab family.

The protein localises to the cell membrane. In terms of biological role, protein transport. Probably involved in vesicular traffic. This Chlamydomonas reinhardtii (Chlamydomonas smithii) protein is GTP-binding protein YPTC1 (YPTC1).